The following is a 342-amino-acid chain: Probable dual-specificity RNA methyltransferase RlmN (342 aa).

Glu91 (proton acceptor) is an active-site residue. One can recognise a Radical SAM core domain in the interval 97–327; that stretch reads YKHGNSICVS…TTIRREMGAD (231 aa). A disulfide bond links Cys104 and Cys332. Residues Cys111, Cys115, and Cys118 each coordinate [4Fe-4S] cluster. S-adenosyl-L-methionine-binding positions include 158–159, Ser190, 213–215, and Asn289; these read GE and SLH. The active-site S-methylcysteine intermediate is the Cys332.

The protein belongs to the radical SAM superfamily. RlmN family. [4Fe-4S] cluster serves as cofactor.

It is found in the cytoplasm. The enzyme catalyses adenosine(2503) in 23S rRNA + 2 reduced [2Fe-2S]-[ferredoxin] + 2 S-adenosyl-L-methionine = 2-methyladenosine(2503) in 23S rRNA + 5'-deoxyadenosine + L-methionine + 2 oxidized [2Fe-2S]-[ferredoxin] + S-adenosyl-L-homocysteine. The catalysed reaction is adenosine(37) in tRNA + 2 reduced [2Fe-2S]-[ferredoxin] + 2 S-adenosyl-L-methionine = 2-methyladenosine(37) in tRNA + 5'-deoxyadenosine + L-methionine + 2 oxidized [2Fe-2S]-[ferredoxin] + S-adenosyl-L-homocysteine. Functionally, specifically methylates position 2 of adenine 2503 in 23S rRNA and position 2 of adenine 37 in tRNAs. In Clostridium botulinum (strain Langeland / NCTC 10281 / Type F), this protein is Probable dual-specificity RNA methyltransferase RlmN.